Consider the following 782-residue polypeptide: Zinc finger protein 786 (782 aa).

In terms of domain architecture, KRAB spans 9–80; it reads LTFEDVAIYF…WRESQKSGNI (72 aa). Positions 141-164 are disordered; that stretch reads PQRHDARAPPPLACGPSESTLKEG. The C2H2-type 1; degenerate zinc finger occupies 192–209; it reads CGESCWENNHLVMHQRGH. Residues 240–262 form a C2H2-type 2 zinc finger; that stretch reads FRCGVCGKSFRRKLCLLRHLAAH. The tract at residues 285–364 is disordered; that stretch reads SHRLPQQGEK…EGDTEALQHG (80 aa). A C2H2-type 3; degenerate zinc finger spans residues 369–391; that stretch reads CSCSECGERSPMSARLASPCRAH. C2H2-type zinc fingers lie at residues 397–419, 425–447, and 453–475; these read FQCA…QHAH, FSCR…IRVH, and FRCA…QRLH. Residues 481 to 503 form a C2H2-type 7; degenerate zinc finger; the sequence is FQCPECGLSFRLESMLRAHRLRH. C2H2-type zinc fingers lie at residues 509–531, 537–559, 565–587, 593–615, 621–643, 649–670, 676–698, 704–726, and 732–754; these read FSCS…LRVH, FQCL…QHTH, FSCG…LRVH, FQCP…QRLH, FQCP…QLLH, FSCE…IRTH, FQCP…QGLH, FHCP…QRIH, and FACG…IRVH.

The protein belongs to the krueppel C2H2-type zinc-finger protein family.

Its subcellular location is the nucleus. Its function is as follows. May be involved in transcriptional regulation. The chain is Zinc finger protein 786 (ZNF786) from Homo sapiens (Human).